Here is a 156-residue protein sequence, read N- to C-terminus: Small ribosomal subunit protein uS7 (156 aa).

This sequence belongs to the universal ribosomal protein uS7 family. Part of the 30S ribosomal subunit. Contacts proteins S9 and S11.

Functionally, one of the primary rRNA binding proteins, it binds directly to 16S rRNA where it nucleates assembly of the head domain of the 30S subunit. Is located at the subunit interface close to the decoding center, probably blocks exit of the E-site tRNA. This Bacillus mycoides (strain KBAB4) (Bacillus weihenstephanensis) protein is Small ribosomal subunit protein uS7.